Here is a 250-residue protein sequence, read N- to C-terminus: Proteasome subunit alpha type-4 (250 aa).

Belongs to the peptidase T1A family. In terms of assembly, the 26S proteasome consists of a 20S proteasome core and two 19S regulatory subunits. The 20S proteasome core is composed of 28 subunits that are arranged in four stacked rings, resulting in a barrel-shaped structure. The two end rings are each formed by seven alpha subunits, and the two central rings are each formed by seven beta subunits. The catalytic chamber with the active sites is on the inside of the barrel.

It is found in the cytoplasm. It localises to the nucleus. In terms of biological role, the proteasome is a multicatalytic proteinase complex which is characterized by its ability to cleave peptides with Arg, Phe, Tyr, Leu, and Glu adjacent to the leaving group at neutral or slightly basic pH. The proteasome has an ATP-dependent proteolytic activity. This chain is Proteasome subunit alpha type-4 (PAC1), found in Spinacia oleracea (Spinach).